Reading from the N-terminus, the 142-residue chain is Putative pre-16S rRNA nuclease (142 aa).

It belongs to the YqgF nuclease family.

The protein resides in the cytoplasm. Functionally, could be a nuclease involved in processing of the 5'-end of pre-16S rRNA. This chain is Putative pre-16S rRNA nuclease, found in Mesoplasma florum (strain ATCC 33453 / NBRC 100688 / NCTC 11704 / L1) (Acholeplasma florum).